The sequence spans 163 residues: MSDAEDIPTGRKRRPREQTPVQRALGLLVRREHSRKELTRKLTARGIEDEAAQAAVAKLTEAGWQDDARFAENLVRMRANTGYGPIHVRAELGTHGLDSEAIAAAMDSYEGDWQENARDLVRRRFGETGPQDLAQRRKAADLLARRGFDGDSIRRATRYDPDD.

The disordered stretch occupies residues 1-21 (MSDAEDIPTGRKRRPREQTPV).

It belongs to the RecX family.

The protein resides in the cytoplasm. In terms of biological role, modulates RecA activity. The polypeptide is Regulatory protein RecX (Stenotrophomonas maltophilia (strain R551-3)).